Consider the following 327-residue polypeptide: MSISDNNMSGRSHDPEQIDLIDLLMQLWRGKVTIIICIVVAIALAVGYLAVAKEKWTSIAIVTQPDAGQLASYNNAMDVLFGANAPEMTDVQAGFIGRFSSAFSALAETLDNQQEPEKLSIDAAVKGQTLPLKVSYTGKTSEEAQKTLAQYIQQVDEGVAKELNADLSMSMETRLADLQKSLAAQEAVAKEQKTLRIAQMTQALKVAQQSNIKLPQVQQVDQVSQDSMFMLGSEALSSMVENEATRPLTFSDQYYQTRQNLLEVQALEVAPDSVHAYRYVMKPTLPIRRDSPKKAITLVLAVLIGGMIGAGVVLGRNALRGYKAKAE.

Residues 1–31 are Cytoplasmic-facing; it reads MSISDNNMSGRSHDPEQIDLIDLLMQLWRGK. Residues 32–52 form a helical membrane-spanning segment; the sequence is VTIIICIVVAIALAVGYLAVA. Over 53-294 the chain is Periplasmic; that stretch reads KEKWTSIAIV…LPIRRDSPKK (242 aa). Residues 295–315 form a helical membrane-spanning segment; that stretch reads AITLVLAVLIGGMIGAGVVLG. Topologically, residues 316 to 327 are cytoplasmic; sequence RNALRGYKAKAE.

Belongs to the WzzB/Cld/Rol family.

It is found in the cell inner membrane. It participates in bacterial outer membrane biogenesis; lipopolysaccharide biosynthesis. Functionally, confers a modal distribution of chain length on the O-antigen component of lipopolysaccharide (LPS). Gives rise to a reduced number of short chain molecules and increases in numbers of longer molecules, with a modal value of 13 (in strain O111/M92) and of 17 (in strain K12). The chain is Chain length determinant protein (wzzB) from Escherichia coli O111:H-.